The sequence spans 57 residues: Large ribosomal subunit protein bL32 (57 aa).

This sequence belongs to the bacterial ribosomal protein bL32 family.

This is Large ribosomal subunit protein bL32 from Geobacillus sp. (strain WCH70).